A 129-amino-acid polypeptide reads, in one-letter code: Small ribosomal subunit protein uS11 (129 aa).

The protein belongs to the universal ribosomal protein uS11 family. As to quaternary structure, part of the 30S ribosomal subunit. Interacts with proteins S7 and S18. Binds to IF-3.

Located on the platform of the 30S subunit, it bridges several disparate RNA helices of the 16S rRNA. Forms part of the Shine-Dalgarno cleft in the 70S ribosome. The sequence is that of Small ribosomal subunit protein uS11 from Limosilactobacillus fermentum (strain NBRC 3956 / LMG 18251) (Lactobacillus fermentum).